The sequence spans 894 residues: Translation initiation factor IF-2 (894 aa).

A disordered region spans residues 52-301 (DRGAAPNKLT…RRPSTLTQGF (250 aa)). The span at 68 to 82 (STLNIPSTGGKSKSV) shows a compositional bias: polar residues. The span at 107–154 (EQARREAEELAQHQVQRDAEEKAKRAAEDKAKREAAEQAKRVAAESDK) shows a compositional bias: basic and acidic residues. Polar residues predominate over residues 155–168 (LTNQQTNTMTKSPQ). Composition is skewed to basic and acidic residues over residues 171 to 214 (EKAR…ERGG) and 237 to 254 (HARE…GDRR). The span at 255–269 (SRTRGGKATKQKKTS) shows a compositional bias: basic residues. The span at 270 to 283 (RLSESKADREEARA) shows a compositional bias: basic and acidic residues. Residues 393-562 (SRAPVVTIMG…LLQAEVLELK (170 aa)) enclose the tr-type G domain. Positions 402–409 (GHVDHGKT) are G1. 402-409 (GHVDHGKT) provides a ligand contact to GTP. Residues 427–431 (GITQH) are G2. The tract at residues 448–451 (DTPG) is G3. Residues 448-452 (DTPGH) and 502-505 (NKID) contribute to the GTP site. The interval 502-505 (NKID) is G4. Residues 538 to 540 (SAK) are G5.

Belongs to the TRAFAC class translation factor GTPase superfamily. Classic translation factor GTPase family. IF-2 subfamily.

It is found in the cytoplasm. Functionally, one of the essential components for the initiation of protein synthesis. Protects formylmethionyl-tRNA from spontaneous hydrolysis and promotes its binding to the 30S ribosomal subunits. Also involved in the hydrolysis of GTP during the formation of the 70S ribosomal complex. The polypeptide is Translation initiation factor IF-2 (Sodalis glossinidius (strain morsitans)).